Consider the following 340-residue polypeptide: Protein arginine N-methyltransferase 6 (340 aa).

The SAM-dependent MTase PRMT-type domain occupies 15–339 (DQEYFQCYSD…LRRTKHFHMG (325 aa)). 5 residues coordinate S-adenosyl-L-methionine: His28, Arg37, Gly61, Glu83, and Glu112. Catalysis depends on residues Glu126 and Glu135.

Belongs to the class I-like SAM-binding methyltransferase superfamily. Protein arginine N-methyltransferase family. PRMT6 subfamily.

It localises to the nucleus. It carries out the reaction L-arginyl-[protein] + 2 S-adenosyl-L-methionine = N(omega),N(omega)-dimethyl-L-arginyl-[protein] + 2 S-adenosyl-L-homocysteine + 2 H(+). In terms of biological role, arginine methyltransferase that can catalyze the formation of both omega-N monomethylarginine (MMA) and asymmetrical dimethylarginine (aDMA), with a strong preference for the formation of aDMA. Preferentially methylates arginyl residues present in a glycine and arginine-rich domain and displays preference for monomethylated substrates. Specifically mediates the asymmetric dimethylation of histone H3 'Arg-2' to form H3R2me2a. H3R2me2a represents a specific tag for epigenetic transcriptional repression and is mutually exclusive with methylation on histone H3 'Lys-4' (H3K4me2 and H3K4me3). Acts as a transcriptional repressor of various genes such as HOXA2, THBS1 and TP53. Repression of TP53 blocks cellular senescence. Also methylates histone H2A and H4 'Arg-3' (H2AR3me and H4R3me, respectively). Acts as a regulator of DNA base excision during DNA repair by mediating the methylation of DNA polymerase beta (POLB), leading to the stimulation of its polymerase activity by enhancing DNA binding and processivity. Methylates HMGA1. Regulates alternative splicing events. Acts as a transcriptional coactivator of a number of steroid hormone receptors including ESR1, ESR2, PGR and NR3C1. In Xenopus laevis (African clawed frog), this protein is Protein arginine N-methyltransferase 6 (prmt6).